Reading from the N-terminus, the 516-residue chain is GMP synthase [glutamine-hydrolyzing] (516 aa).

One can recognise a Glutamine amidotransferase type-1 domain in the interval 8–198; sequence KILILDFGSQ…VVNICGCDTL (191 aa). Cys-84 functions as the Nucleophile in the catalytic mechanism. Residues His-172 and Glu-174 contribute to the active site. A GMPS ATP-PPase domain is found at 199 to 391; it reads WNIENIIEND…LGLPYNMLYR (193 aa). 226–232 serves as a coordination point for ATP; that stretch reads SGGVDSS.

As to quaternary structure, homodimer.

The enzyme catalyses XMP + L-glutamine + ATP + H2O = GMP + L-glutamate + AMP + diphosphate + 2 H(+). It participates in purine metabolism; GMP biosynthesis; GMP from XMP (L-Gln route): step 1/1. Its function is as follows. Catalyzes the synthesis of GMP from XMP. This Francisella tularensis subsp. tularensis (strain FSC 198) protein is GMP synthase [glutamine-hydrolyzing].